The primary structure comprises 98 residues: Small ribosomal subunit protein bS6 (98 aa).

The protein belongs to the bacterial ribosomal protein bS6 family.

Functionally, binds together with bS18 to 16S ribosomal RNA. In Staphylococcus epidermidis (strain ATCC 35984 / DSM 28319 / BCRC 17069 / CCUG 31568 / BM 3577 / RP62A), this protein is Small ribosomal subunit protein bS6.